Reading from the N-terminus, the 499-residue chain is Anaerobic magnesium-protoporphyrin IX monomethyl ester cyclase (499 aa).

The B12-binding domain occupies 9 to 145 (PHPAIGSRIP…AALENHNDLN (137 aa)). The Radical SAM core domain maps to 188-420 (YGGKQAVVIQ…PPWRIFLWVK (233 aa)). Cys-202, Cys-206, and Cys-209 together coordinate [4Fe-4S] cluster.

Belongs to the BchE family. [4Fe-4S] cluster is required as a cofactor. The cofactor is adenosylcob(III)alamin.

It carries out the reaction Mg-protoporphyrin IX 13-monomethyl ester + 3 S-adenosyl-L-methionine + H2O = 3,8-divinyl protochlorophyllide a + 3 5'-deoxyadenosine + 3 L-methionine + 4 H(+). It participates in porphyrin-containing compound metabolism; bacteriochlorophyll biosynthesis (light-independent). Its function is as follows. Involved in the tetrapyrrole biosynthetic pathways leading to chlorophyll and bacteriochlorophyll (BChl). Catalyzes the anaerobic formation of the isocyclic ring (E-ring) in Mg-protoporphyrin monomethyl ester (MPE) to yield protochlorophyllide a (PChlide a) via a six-electron oxidation and the formation of an oxo group at position C13 using oxygen from a water molecule. This is Anaerobic magnesium-protoporphyrin IX monomethyl ester cyclase from Synechocystis sp. (strain ATCC 27184 / PCC 6803 / Kazusa).